The primary structure comprises 433 residues: ATP-dependent RNA helicase SUB2 (433 aa).

Residues 49 to 77 (TGFRDFLLKPELLRAIGDCGFEHPSEVQQ) carry the Q motif motif. The Helicase ATP-binding domain maps to 80 to 255 (IPQSILGTDV…KKFMQNPLEI (176 aa)). 93-100 (AKSGLGKT) serves as a coordination point for ATP. A DEAD box motif is present at residues 202 to 205 (DECD). In terms of domain architecture, Helicase C-terminal spans 267 to 428 (GLQQYYIKLE…EFPEEGVDPS (162 aa)).

Belongs to the DEAD box helicase family. DECD subfamily.

It is found in the nucleus. The catalysed reaction is ATP + H2O = ADP + phosphate + H(+). Functionally, ATP-binding RNA helicase involved in transcription elongation and required for the export of mRNA out of the nucleus. SUB2 also plays a role in pre-mRNA splicing and spliceosome assembly. May be involved in rDNA and telomeric silencing, and maintenance of genome integrity. The chain is ATP-dependent RNA helicase SUB2 (SUB2) from Scheffersomyces stipitis (strain ATCC 58785 / CBS 6054 / NBRC 10063 / NRRL Y-11545) (Yeast).